The sequence spans 544 residues: Rubrofusarin-specific efflux pump aurT (544 aa).

Basic and acidic residues predominate over residues 1–12 (MTDNTDMEKLDR). The interval 1 to 42 (MTDNTDMEKLDRATTPTPIPNEAPPTSEPSESKPEEAEDESK) is disordered. Pro residues predominate over residues 17-27 (TPIPNEAPPTS). The segment covering 30–42 (SESKPEEAEDESK) has biased composition (basic and acidic residues). A run of 8 helical transmembrane segments spans residues 45–65 (HGLK…LVAL), 89–111 (WYAS…IFTF), 116–136 (TVYL…GVAP), 146–166 (AIAG…ITTV), 177–197 (GMMG…GGAF), 205–225 (WCFY…ILLF), 246–266 (WGNL…QWGG), and 276–296 (IVAL…IQIW). N300 carries an N-linked (GlcNAc...) asparagine glycan. A run of 6 helical transmembrane segments spans residues 318-338 (IFAF…PIWF), 357-377 (VLSL…VGWF), 380-400 (VFFS…TFVV), 407-427 (WIGY…LASL), 444-464 (LMFF…QAVF), and 514-534 (YFYV…GIEW).

It belongs to the major facilitator superfamily. TCR/Tet family.

The protein localises to the cell membrane. It participates in pigment biosynthesis. Its function is as follows. Rubrofusarin-specific efflux pump; part of the gene cluster that mediates the biosynthesis of aurofusarin, a red mycelium pigment which is acting as a mycotoxin. The first step is performed by the polyketide synthase which condenses one acetyl-CoA and 6 malonyl-CoA units to form the first intermediate, the cyclic heptaketide and yellow pigment YWA1. The C2 hydroxyl group in the pyrone ring of YWA1 is probably formed during ring closure by an aldol-type cyclization reaction. The dehydratase aurZ then acts as the first tailoring enzyme in the aurofusarin biosynthetic pathway by converting YWA1 to nor-rubrofusarin. Nor-rubrofusarin is then methylated to rubrofusarin by the O-methyltransferase aurJ. Rubrofusarin is then transported across the plasma membrane by the rubrofusarin-specific pump aurT for further enzymatic processing by the extracellular complex composed of GIP1, aurF, aurO and aurS to yield aurofusarin. The polypeptide is Rubrofusarin-specific efflux pump aurT (Gibberella zeae (strain ATCC MYA-4620 / CBS 123657 / FGSC 9075 / NRRL 31084 / PH-1) (Wheat head blight fungus)).